The following is a 150-amino-acid chain: MQIWVDADACPKVIKEILYRAAERTGVLLTLVANQPLFPPRSLWIKTLQVPPGFDVADNEIVRRLATGDLVVTADIPLAAEVIACGGHALNPRGEFYSTENIRELLNLRDFMDTLRSSGVQTGGPAALTQADRQVFANRLDQFLARIVSD.

Belongs to the UPF0178 family.

This chain is UPF0178 protein AZOSEA36080, found in Aromatoleum aromaticum (strain DSM 19018 / LMG 30748 / EbN1) (Azoarcus sp. (strain EbN1)).